A 150-amino-acid polypeptide reads, in one-letter code: Leukotriene C4 synthase (150 aa).

The Cytoplasmic segment spans residues Met1 to Ala6. The chain crosses the membrane as a helical span at residues Leu7–Ile27. Residues Ser28 to Arg48 lie on the Lumenal side of the membrane. Residue Arg30 coordinates glutathione. Arg31 (proton donor) is an active-site residue. A Phosphoserine modification is found at Ser36. Residues Val49–Val69 traverse the membrane as a helical segment. Glutathione contacts are provided by residues Arg51–Asn55 and Glu58–Tyr59. Topologically, residues Ala70–Phe73 are cytoplasmic. Residues Phe74–Phe94 traverse the membrane as a helical segment. Tyr93 to Tyr97 is a binding site for glutathione. The Lumenal segment spans residues Gln95–Arg104. Arg104 acts as the Proton acceptor in catalysis. The helical transmembrane segment at Leu105–Leu124 threads the bilayer. Topologically, residues Gly125–Ala150 are cytoplasmic.

Belongs to the MAPEG family. Homotrimer. Interacts with ALOX5AP and ALOX5. Phosphorylation at Ser-36 by RPS6KB1 inhibits the leukotriene-C4 synthase activity.

Its subcellular location is the nucleus outer membrane. It is found in the endoplasmic reticulum membrane. The protein resides in the nucleus membrane. The enzyme catalyses leukotriene C4 = leukotriene A4 + glutathione. It catalyses the reaction (13S,14S)-epoxy-(4Z,7Z,9E,11E,16Z,19Z)-docosahexaenoate + glutathione = (13R)-S-glutathionyl-(14S)-hydroxy-(4Z,7Z,9E,11E,16Z,19Z)-docosahexaenoate. The protein operates within lipid metabolism; leukotriene C4 biosynthesis. Its activity is regulated as follows. Inhibited by MK886. Functionally, catalyzes the conjugation of leukotriene A4 with reduced glutathione (GSH) to form leukotriene C4 with high specificity. Can also catalyze the transfer of a glutathionyl group from glutathione (GSH) to 13(S),14(S)-epoxy-docosahexaenoic acid to form maresin conjugate in tissue regeneration 1 (MCTR1), a bioactive lipid mediator that possess potent anti-inflammatory and proresolving actions. The chain is Leukotriene C4 synthase (Ltc4s) from Rattus norvegicus (Rat).